The sequence spans 191 residues: Large ribosomal subunit protein bL12cz (191 aa).

The transit peptide at 1 to 58 (MASTTLSIATTIRSSSYPTLASINHFPSRTTTIEFPSRFGGGSSSTLTHRATHLRPIA) directs the protein to the chloroplast.

The protein belongs to the bacterial ribosomal protein bL12 family.

The protein resides in the plastid. The protein localises to the chloroplast. This Arabidopsis thaliana (Mouse-ear cress) protein is Large ribosomal subunit protein bL12cz (RPL12A).